The chain runs to 364 residues: Fructose-bisphosphate aldolase B (364 aa).

N-acetylalanine is present on Ala-2. Position 13 is an N6-succinyllysine (Lys-13). Ser-36 is subject to Phosphoserine. Thr-39 is modified (phosphothreonine). A beta-D-fructose 1,6-bisphosphate-binding site is contributed by Arg-43. Thr-119 carries the post-translational modification Phosphothreonine. Lys-121 carries the N6-succinyllysine modification. Position 132 is a phosphoserine (Ser-132). The active-site Proton acceptor is the Glu-188. The active-site Schiff-base intermediate with dihydroxyacetone-P is the Lys-230. Ser-272, Ser-276, Ser-299, and Ser-301 each carry phosphoserine. A beta-D-fructose 1,6-bisphosphate-binding site is contributed by Ser-272–Gly-274. Arg-304 contacts beta-D-fructose 1,6-bisphosphate. The residue at position 309 (Ser-309) is a Phosphoserine. Lys-317 bears the N6-succinyllysine mark.

Belongs to the class I fructose-bisphosphate aldolase family. As to quaternary structure, homotetramer. Interacts with BBS1, BBS2, BBS4 and BBS7. Forms a ternary complex with G6PD and TP53; this interaction is direct.

The protein resides in the cytoplasm. It localises to the cytosol. The protein localises to the cytoskeleton. It is found in the microtubule organizing center. Its subcellular location is the centrosome. The protein resides in the centriolar satellite. It carries out the reaction beta-D-fructose 1,6-bisphosphate = D-glyceraldehyde 3-phosphate + dihydroxyacetone phosphate. The enzyme catalyses beta-D-fructose 1-phosphate = D-glyceraldehyde + dihydroxyacetone phosphate. It participates in carbohydrate degradation; glycolysis; D-glyceraldehyde 3-phosphate and glycerone phosphate from D-glucose: step 4/4. Its pathway is carbohydrate biosynthesis; gluconeogenesis. It functions in the pathway carbohydrate metabolism; fructose metabolism. Its function is as follows. Catalyzes the aldol cleavage of fructose 1,6-biphosphate to form two triosephosphates dihydroxyacetone phosphate and D-glyceraldehyde 3-phosphate in glycolysis as well as the reverse stereospecific aldol addition reaction in gluconeogenesis. In fructolysis, metabolizes fructose 1-phosphate derived from the phosphorylation of dietary fructose by fructokinase into dihydroxyacetone phosphate and D-glyceraldehyde. Acts as an adapter independently of its enzymatic activity, exerts a tumor suppressor role by stabilizing the ternary complex with G6PD and TP53 to inhibit G6PD activity and keep oxidative pentose phosphate metabolism in check. The polypeptide is Fructose-bisphosphate aldolase B (ALDOB) (Bos taurus (Bovine)).